The following is a 248-amino-acid chain: Large ribosomal subunit protein uL30B (248 aa).

The interval 1–45 (MSQKKQKIQVEQKVPENVAKKTQRDSKLRDAVAKRRTERLAANKT) is disordered. Residues 8 to 41 (IQVEQKVPENVAKKTQRDSKLRDAVAKRRTERLA) are compositionally biased toward basic and acidic residues.

The protein belongs to the universal ribosomal protein uL30 family.

Binds to G-rich structures in 28S rRNA and in mRNAs. Plays a regulatory role in the translation apparatus; inhibits cell-free translation of mRNAs. The sequence is that of Large ribosomal subunit protein uL30B (Rpl7-2) from Paramecium tetraurelia.